The primary structure comprises 72 residues: uncharacterized protein (72 aa).

This is an uncharacterized protein from Homo sapiens (Human).